Here is a 360-residue protein sequence, read N- to C-terminus: DNA polymerase IV (360 aa).

Residues 6-187 (IIHVDMDAFY…LKIGDLHGVG (182 aa)) form the UmuC domain. Mg(2+) contacts are provided by Asp-10 and Asp-105. Glu-106 is an active-site residue.

It belongs to the DNA polymerase type-Y family. Monomer. The cofactor is Mg(2+).

The protein localises to the cytoplasm. The enzyme catalyses DNA(n) + a 2'-deoxyribonucleoside 5'-triphosphate = DNA(n+1) + diphosphate. Poorly processive, error-prone DNA polymerase involved in untargeted mutagenesis. Copies undamaged DNA at stalled replication forks, which arise in vivo from mismatched or misaligned primer ends. These misaligned primers can be extended by PolIV. Exhibits no 3'-5' exonuclease (proofreading) activity. May be involved in translesional synthesis, in conjunction with the beta clamp from PolIII. This chain is DNA polymerase IV, found in Exiguobacterium sibiricum (strain DSM 17290 / CCUG 55495 / CIP 109462 / JCM 13490 / 255-15).